The chain runs to 445 residues: Tubulin beta-2 chain (445 aa).

Glutamine 12, glutamate 73, serine 142, glycine 146, threonine 147, glycine 148, asparagine 208, and asparagine 230 together coordinate GTP. Glutamate 73 is a binding site for Mg(2+).

Belongs to the tubulin family. Dimer of alpha and beta chains. A typical microtubule is a hollow water-filled tube with an outer diameter of 25 nm and an inner diameter of 15 nM. Alpha-beta heterodimers associate head-to-tail to form protofilaments running lengthwise along the microtubule wall with the beta-tubulin subunit facing the microtubule plus end conferring a structural polarity. Microtubules usually have 13 protofilaments but different protofilament numbers can be found in some organisms and specialized cells. Requires Mg(2+) as cofactor.

The protein resides in the cytoplasm. It is found in the cytoskeleton. Functionally, tubulin is the major constituent of microtubules, a cylinder consisting of laterally associated linear protofilaments composed of alpha- and beta-tubulin heterodimers. Microtubules grow by the addition of GTP-tubulin dimers to the microtubule end, where a stabilizing cap forms. Below the cap, tubulin dimers are in GDP-bound state, owing to GTPase activity of alpha-tubulin. The protein is Tubulin beta-2 chain (TUBB2) of Suillus bovinus (Jersey cow bolete).